The sequence spans 242 residues: Mediator of RNA polymerase II transcription subunit 19-A (242 aa).

A compositionally biased stretch (polar residues) spans Met1 to Gln15. Disordered regions lie at residues Met1–Ser33 and Pro171–Arg242. Residues Pro171–His184 show a composition bias toward basic residues. The span at Thr193 to Arg210 shows a compositional bias: basic and acidic residues. Basic residues predominate over residues Arg211–Arg223. Positions Thr232–Arg242 are enriched in polar residues.

The protein belongs to the Mediator complex subunit 19 family. As to quaternary structure, component of the Mediator complex.

The protein localises to the nucleus. In terms of biological role, component of the Mediator complex, a coactivator involved in the regulated transcription of nearly all RNA polymerase II-dependent genes. Mediator functions as a bridge to convey information from gene-specific regulatory proteins to the basal RNA polymerase II transcription machinery. Mediator is recruited to promoters by direct interactions with regulatory proteins and serves as a scaffold for the assembly of a functional preinitiation complex with RNA polymerase II and the general transcription factors. This chain is Mediator of RNA polymerase II transcription subunit 19-A (med19a), found in Danio rerio (Zebrafish).